We begin with the raw amino-acid sequence, 238 residues long: Uridylate kinase (238 aa).

12–15 (KLSG) contributes to the ATP binding site. UMP is bound at residue Gly54. Positions 55 and 59 each coordinate ATP. Residues Asp74 and 135-142 (TGNPYFTT) contribute to the UMP site. ATP-binding residues include Thr162, Tyr168, and Asp171.

This sequence belongs to the UMP kinase family. In terms of assembly, homohexamer.

It localises to the cytoplasm. It catalyses the reaction UMP + ATP = UDP + ADP. It participates in pyrimidine metabolism; CTP biosynthesis via de novo pathway; UDP from UMP (UMPK route): step 1/1. With respect to regulation, inhibited by UTP. Its function is as follows. Catalyzes the reversible phosphorylation of UMP to UDP. This is Uridylate kinase from Lawsonia intracellularis (strain PHE/MN1-00).